The following is a 341-amino-acid chain: Biotin synthase (341 aa).

In terms of domain architecture, Radical SAM core spans 40–267 (AEIQVSTLLS…RSMVRLSAGR (228 aa)). [4Fe-4S] cluster contacts are provided by cysteine 55, cysteine 59, and cysteine 62. Cysteine 99, cysteine 130, cysteine 190, and arginine 262 together coordinate [2Fe-2S] cluster.

It belongs to the radical SAM superfamily. Biotin synthase family. In terms of assembly, homodimer. [4Fe-4S] cluster is required as a cofactor. The cofactor is [2Fe-2S] cluster.

The enzyme catalyses (4R,5S)-dethiobiotin + (sulfur carrier)-SH + 2 reduced [2Fe-2S]-[ferredoxin] + 2 S-adenosyl-L-methionine = (sulfur carrier)-H + biotin + 2 5'-deoxyadenosine + 2 L-methionine + 2 oxidized [2Fe-2S]-[ferredoxin]. It participates in cofactor biosynthesis; biotin biosynthesis; biotin from 7,8-diaminononanoate: step 2/2. In terms of biological role, catalyzes the conversion of dethiobiotin (DTB) to biotin by the insertion of a sulfur atom into dethiobiotin via a radical-based mechanism. This chain is Biotin synthase, found in Xylella fastidiosa (strain M12).